The primary structure comprises 509 residues: Meiotically up-regulated gene 157 protein (509 aa).

Transmembrane regions (helical) follow at residues 4 to 24, 140 to 160, 296 to 316, 368 to 388, and 417 to 437; these read WQAI…NIPW, LATL…QFPY, ACVL…LSHL, ILFM…LGFV, and ISGI…SLIV.

It is found in the endoplasmic reticulum membrane. In terms of biological role, has a role in meiosis. This chain is Meiotically up-regulated gene 157 protein (mug157), found in Schizosaccharomyces pombe (strain 972 / ATCC 24843) (Fission yeast).